The primary structure comprises 154 residues: Aspartate carbamoyltransferase regulatory chain (154 aa).

Zn(2+) contacts are provided by cysteine 109, cysteine 114, cysteine 138, and cysteine 141.

This sequence belongs to the PyrI family. Contains catalytic and regulatory chains. Requires Zn(2+) as cofactor.

Functionally, involved in allosteric regulation of aspartate carbamoyltransferase. The polypeptide is Aspartate carbamoyltransferase regulatory chain (Tolumonas auensis (strain DSM 9187 / NBRC 110442 / TA 4)).